A 280-amino-acid chain; its full sequence is Ataxin-3 homolog (280 aa).

The 181-residue stretch at 7 to 187 (GGMLYHEVQE…QECPMSSSSE (181 aa)) folds into the Josephin domain. Cysteine 20 (nucleophile) is an active-site residue. The Proton acceptor role is filled by histidine 126. Aspartate 141 is an active-site residue. 2 stretches are compositionally biased toward polar residues: residues 183 to 194 (SSSSEASNSFGQ) and 221 to 232 (DNVNQQRRNQAL). A disordered region spans residues 183–240 (SSSSEASNSFGQWLSPEDAERIRKNTSSGSSARNKRSNDNVNQQRRNQALSREEVQAF). One can recognise a UIM domain in the interval 243–262 (MEDDDLKAAIAASLLDASAA).

It localises to the nucleus. It catalyses the reaction Thiol-dependent hydrolysis of ester, thioester, amide, peptide and isopeptide bonds formed by the C-terminal Gly of ubiquitin (a 76-residue protein attached to proteins as an intracellular targeting signal).. Its function is as follows. Interacts with key regulators of transcription and represses transcription. Acts as a histone-binding protein that regulates transcription. Acts as a deubiquitinating enzyme. This Arabidopsis thaliana (Mouse-ear cress) protein is Ataxin-3 homolog.